A 511-amino-acid polypeptide reads, in one-letter code: Zinc finger and BTB domain-containing protein 45 (511 aa).

The 64-residue stretch at 33–96 (CDVTVRIREA…LYSGSLVVAQ (64 aa)) folds into the BTB domain. The span at 159–168 (ARPPGHPGAA) shows a compositional bias: low complexity. Disordered regions lie at residues 159–241 (ARPP…PDCA) and 294–403 (EDGA…PPTY). Residues 206 to 224 (RGDEDDEESDDETDGEDGE) show a composition bias toward acidic residues. Residues 339 to 360 (PGPPAPPPSAPSGPAPAPPPAF) show a composition bias toward pro residues. Residues 378–397 (PAPSAAPTTAPSGTPARTPG) are compositionally biased toward low complexity. C2H2-type zinc fingers lie at residues 403 to 425 (YECS…MFIH), 431 to 453 (HQCA…MVTH), 459 to 481 (FQCA…MRTH), and 486 to 508 (APCP…LAAH).

This sequence belongs to the krueppel C2H2-type zinc-finger protein family.

The protein resides in the nucleus. Functionally, may be involved in transcriptional regulation. In the central nervous system, may play a role in glial cell differentiation. In Homo sapiens (Human), this protein is Zinc finger and BTB domain-containing protein 45 (ZBTB45).